Here is a 462-residue protein sequence, read N- to C-terminus: Cysteine--tRNA ligase (462 aa).

Cys24 is a Zn(2+) binding site. The 'HIGH' region motif lies at 26–36; the sequence is PTVYDDAHLGH. Cys199, His224, and Glu228 together coordinate Zn(2+). Positions 256-260 match the 'KMSKS' region motif; the sequence is KMSKS. Lys259 provides a ligand contact to ATP.

It belongs to the class-I aminoacyl-tRNA synthetase family. As to quaternary structure, monomer. Zn(2+) serves as cofactor.

Its subcellular location is the cytoplasm. It carries out the reaction tRNA(Cys) + L-cysteine + ATP = L-cysteinyl-tRNA(Cys) + AMP + diphosphate. This is Cysteine--tRNA ligase from Campylobacter jejuni subsp. jejuni serotype O:6 (strain 81116 / NCTC 11828).